The chain runs to 1699 residues: Cilia- and flagella-associated protein 61 (1699 aa).

The span at 1-22 (MYSNNQLDNPNHSRSQYRNGDQ) shows a compositional bias: polar residues. Disordered regions lie at residues 1–23 (MYSNNQLDNPNHSRSQYRNGDQS), 489–515 (QLKRPQKKVTKRPKRQKEEDKKEDEFK), and 1340–1365 (ERDANSENADKGFDDTQSRDGDEENQ). Positions 489 to 503 (QLKRPQKKVTKRPKR) are enriched in basic residues. 2 stretches are compositionally biased toward basic and acidic residues: residues 504–515 (QKEEDKKEDEFK) and 1340–1359 (ERDANSENADKGFDDTQSRD).

It is found in the cell projection. The protein localises to the cilium. Its function is as follows. As component of a spoke-associated complex, regulates ciliary mobility by mediating a stable and functional assembly of the radial spoke 3 (RS3). This Tetrahymena thermophila (strain SB210) protein is Cilia- and flagella-associated protein 61.